A 255-amino-acid polypeptide reads, in one-letter code: Indole-3-glycerol phosphate synthase (255 aa).

This sequence belongs to the TrpC family.

It carries out the reaction 1-(2-carboxyphenylamino)-1-deoxy-D-ribulose 5-phosphate + H(+) = (1S,2R)-1-C-(indol-3-yl)glycerol 3-phosphate + CO2 + H2O. It participates in amino-acid biosynthesis; L-tryptophan biosynthesis; L-tryptophan from chorismate: step 4/5. The chain is Indole-3-glycerol phosphate synthase from Streptococcus pneumoniae (strain Hungary19A-6).